Reading from the N-terminus, the 418-residue chain is Deubiquitinase and deneddylase Dub1 (418 aa).

Residues 1–10 (MLSPTNSISK) are compositionally biased toward polar residues. The disordered stretch occupies residues 1-23 (MLSPTNSISKTAPVPPQDSSKPV). The chain crosses the membrane as a helical span at residues 40–60 (TALAVLLVVVTLGLILLFYSF). Positions 72–144 (TRPSTKEQPT…PLPPKAPKPV (73 aa)) are disordered. A compositionally biased stretch (pro residues) spans 86 to 141 (VPLPSPPLAVPRPSTPPPPVISRPSTPPAPTPAISPPSTPSAPKPSTPPPLPPKAP). Active-site residues include H288, D305, and C358.

It belongs to the peptidase C48 family.

The protein resides in the secreted. It localises to the host cell. The protein localises to the membrane. In terms of biological role, effector proteins function to alter host cell physiology and promote bacterial survival in host tissues. This protease possesses deubiquitinating and deneddylating activities. This is Deubiquitinase and deneddylase Dub1 (cdu1) from Chlamydia trachomatis serovar B (strain TZ1A828/OT).